We begin with the raw amino-acid sequence, 574 residues long: K(+)/H(+) antiporter NhaP2 (574 aa).

Helical transmembrane passes span 6–26 (INSF…LSPV), 34–54 (ILLI…GGIL), 58–78 (YSTA…DGGM), 87–107 (VALW…TSIT), 109–129 (VMAA…GAIV), 173–193 (IAIL…ISFI), 196–216 (FGLG…LVNL), 219–239 (LAEG…YAAS), 242–262 (LGGS…NKPT), 271–291 (VLDG…GLLL), 299–319 (IWLP…PLAV), 335–355 (WFIS…VFPM), and 359–379 (LPGA…SLLV). The region spanning 405-486 (SGVEIYPSSE…LEALSNLFSQ (82 aa)) is the RCK C-terminal domain.

Belongs to the monovalent cation:proton antiporter 1 (CPA1) transporter (TC 2.A.36) family. NhaP2 subfamily.

The protein resides in the cell inner membrane. The catalysed reaction is K(+)(in) + H(+)(out) = K(+)(out) + H(+)(in). Its function is as follows. K(+)/H(+) antiporter that extrudes potassium in exchange for external protons and maintains the internal concentration of potassium under toxic levels. This Shewanella sp. (strain ANA-3) protein is K(+)/H(+) antiporter NhaP2.